A 372-amino-acid polypeptide reads, in one-letter code: Glutamate 5-kinase (372 aa).

Lys-14 lines the ATP pocket. Residues Ser-54, Asp-141, and Asn-153 each coordinate substrate. ATP is bound by residues Thr-173–Asp-174 and Thr-215–Lys-221. Residues Ala-280 to Ile-358 enclose the PUA domain.

It belongs to the glutamate 5-kinase family.

The protein localises to the cytoplasm. It carries out the reaction L-glutamate + ATP = L-glutamyl 5-phosphate + ADP. The protein operates within amino-acid biosynthesis; L-proline biosynthesis; L-glutamate 5-semialdehyde from L-glutamate: step 1/2. Its function is as follows. Catalyzes the transfer of a phosphate group to glutamate to form L-glutamate 5-phosphate. This is Glutamate 5-kinase from Chromobacterium violaceum (strain ATCC 12472 / DSM 30191 / JCM 1249 / CCUG 213 / NBRC 12614 / NCIMB 9131 / NCTC 9757 / MK).